We begin with the raw amino-acid sequence, 707 residues long: ATP-dependent zinc metalloprotease FtsH (707 aa).

Residues 1–25 (MSELDNKKDKSKDSNKKPKKPGAFS) lie on the Cytoplasmic side of the membrane. Residues 26–46 (IGNIIIFVIVALLLIWVVFAF) traverse the membrane as a helical segment. At 47-128 (LPNNPGTNKS…GTTFTGLELA (82 aa)) the chain is on the extracellular side. A helical transmembrane segment spans residues 129-149 (TLAIANTSASGIGTLNFSGLV). Residues 150 to 707 (TPTNQALAIL…IKTDESLDIK (558 aa)) are Cytoplasmic-facing. 246-253 (GPPGTGKT) is an ATP binding site. Position 468 (histidine 468) interacts with Zn(2+). Residue glutamate 469 is part of the active site. Residues histidine 472 and aspartate 546 each contribute to the Zn(2+) site.

It in the central section; belongs to the AAA ATPase family. In the C-terminal section; belongs to the peptidase M41 family. As to quaternary structure, homohexamer. Zn(2+) is required as a cofactor.

The protein resides in the cell membrane. In terms of biological role, acts as a processive, ATP-dependent zinc metallopeptidase for both cytoplasmic and membrane proteins. Plays a role in the quality control of integral membrane proteins. The protein is ATP-dependent zinc metalloprotease FtsH of Mycoplasma mobile (strain ATCC 43663 / 163K / NCTC 11711) (Mesomycoplasma mobile).